The following is a 21-amino-acid chain: Venom peptide Tv1 (21 aa).

3 disulfide bridges follow: cysteine 4-cysteine 20, cysteine 5-cysteine 21, and cysteine 7-cysteine 16.

Expressed by the salivary gland. This peptide is considered as a venom peptide.

The protein resides in the secreted. In terms of biological role, injections of 20 uM of this synthetic peptide (Ile) causes partial paralysis to polychaete worms (Nereis virens), the natural prey of terebrid snails. This paralysis may be due to an inhibition of nicotinic receptors at the neuromuscular junction. The chain is Venom peptide Tv1 from Terebra variegata (Variegate auger snail).